Here is an 85-residue protein sequence, read N- to C-terminus: CRISPR-associated endoribonuclease Cas2 2 (85 aa).

D8 lines the Mg(2+) pocket.

It belongs to the CRISPR-associated endoribonuclease Cas2 protein family. In terms of assembly, homodimer, forms a heterotetramer with a Cas1 homodimer. The cofactor is Mg(2+).

CRISPR (clustered regularly interspaced short palindromic repeat), is an adaptive immune system that provides protection against mobile genetic elements (viruses, transposable elements and conjugative plasmids). CRISPR clusters contain sequences complementary to antecedent mobile elements and target invading nucleic acids. CRISPR clusters are transcribed and processed into CRISPR RNA (crRNA). Functions as a ssRNA-specific endoribonuclease. Involved in the integration of spacer DNA into the CRISPR cassette. The protein is CRISPR-associated endoribonuclease Cas2 2 of Chloroflexus aurantiacus (strain ATCC 29366 / DSM 635 / J-10-fl).